The following is a 485-amino-acid chain: Adenosylhomocysteinase (485 aa).

Residues Thr64, Asp139, and Glu205 each coordinate substrate. 206-208 contacts NAD(+); the sequence is TTT. The substrate site is built by Lys235 and Asp239. Residues Asn240, 269 to 274, Glu292, Asn327, 348 to 350, and Asn397 each bind NAD(+); these read GYGDVG and IGH.

It belongs to the adenosylhomocysteinase family. Homotetramer. Requires NAD(+) as cofactor.

It catalyses the reaction S-adenosyl-L-homocysteine + H2O = L-homocysteine + adenosine. The protein operates within amino-acid biosynthesis; L-homocysteine biosynthesis; L-homocysteine from S-adenosyl-L-homocysteine: step 1/1. In terms of biological role, adenosylhomocysteine is a competitive inhibitor of S-adenosyl-L-methionine-dependent methyl transferase reactions; therefore adenosylhomocysteinase may play a key role in the control of methylations via regulation of the intracellular concentration of adenosylhomocysteine. The chain is Adenosylhomocysteinase (SAHH) from Triticum aestivum (Wheat).